A 1093-amino-acid polypeptide reads, in one-letter code: Semaphorin-5B (1093 aa).

A signal peptide spans Met-1–Leu-19. Residues Val-20 to His-978 are Extracellular-facing. Positions His-45–Leu-495 constitute a Sema domain. N-linked (GlcNAc...) asparagine glycans are attached at residues Asn-59 and Asn-95. 2 disulfide bridges follow: Cys-114/Cys-124 and Cys-141/Cys-150. N-linked (GlcNAc...) asparagine glycosylation is found at Asn-157, Asn-178, and Asn-287. 2 disulfides stabilise this stretch: Cys-264–Cys-367 and Cys-288–Cys-330. Residues Asn-333, Asn-378, Asn-532, Asn-539, Asn-547, and Asn-602 are each glycosylated (N-linked (GlcNAc...) asparagine). 7 TSP type-1 domains span residues Asp-551 to Arg-605, Asn-606 to Pro-662, Pro-664 to Pro-713, Trp-721 to Thr-776, Asn-795 to Pro-850, Arg-852 to Pro-907, and Glu-908 to Pro-952. 6 cysteine pairs are disulfide-bonded: Cys-618/Cys-655, Cys-622/Cys-661, Cys-633/Cys-645, Cys-676/Cys-707, Cys-680/Cys-712, and Cys-691/Cys-697. Asn-728 is a glycosylation site (N-linked (GlcNAc...) asparagine). 6 cysteine pairs are disulfide-bonded: Cys-807-Cys-844, Cys-811-Cys-849, Cys-822-Cys-834, Cys-864-Cys-901, Cys-868-Cys-906, and Cys-879-Cys-891. Asn-944 carries N-linked (GlcNAc...) asparagine glycosylation. The helical transmembrane segment at Leu-979–Leu-999 threads the bilayer. Residues Ser-1000–Ser-1093 are Cytoplasmic-facing.

It belongs to the semaphorin family. In adult, only detected in brain.

The protein localises to the membrane. In terms of biological role, may act as a positive axonal guidance cue. The protein is Semaphorin-5B (Sema5b) of Mus musculus (Mouse).